We begin with the raw amino-acid sequence, 111 residues long: Resistin-like alpha (111 aa).

A signal peptide spans 1-23 (MKTATCSLLICVFLLQLMVPVNT). Cystine bridges form between Cys55-Cys108, Cys67-Cys107, Cys76-Cys93, Cys78-Cys95, and Cys82-Cys97.

The protein belongs to the resistin/FIZZ family. As to quaternary structure, monomer. Highest levels in adipose tissue.

The protein resides in the secreted. In terms of biological role, probable hormone. Plays a role in pulmonary vascular remodeling. The polypeptide is Resistin-like alpha (Retnla) (Rattus norvegicus (Rat)).